The chain runs to 602 residues: UvrABC system protein C (602 aa).

The GIY-YIG domain occupies 17 to 94 (TTSGCYKMYS…IKEHKPDYNI (78 aa)). Residues 199–234 (SKLLDEIEIKMKEVIKREDFESAIKLKETKRSLIEI) enclose the UVR domain.

It belongs to the UvrC family. As to quaternary structure, interacts with UvrB in an incision complex.

The protein localises to the cytoplasm. Its function is as follows. The UvrABC repair system catalyzes the recognition and processing of DNA lesions. UvrC both incises the 5' and 3' sides of the lesion. The N-terminal half is responsible for the 3' incision and the C-terminal half is responsible for the 5' incision. The protein is UvrABC system protein C of Borrelia turicatae (strain 91E135).